The sequence spans 527 residues: Nucleus accumbens-associated protein 1 (527 aa).

Residues cysteine 30–valine 94 enclose the BTB domain. The disordered stretch occupies residues glutamine 131–tryptophan 153. The span at serine 141–glycine 152 shows a compositional bias: polar residues. A Glycyl lysine isopeptide (Lys-Gly) (interchain with G-Cter in SUMO1); alternate cross-link involves residue lysine 167. Residue lysine 167 forms a Glycyl lysine isopeptide (Lys-Gly) (interchain with G-Cter in SUMO2); alternate linkage. A Glycyl lysine isopeptide (Lys-Gly) (interchain with G-Cter in SUMO2) cross-link involves residue lysine 183. Serine 188 carries the post-translational modification Phosphoserine. Positions aspartate 210–glycine 292 are disordered. A compositionally biased stretch (low complexity) spans alanine 225–glycine 251. The span at glycine 255–serine 277 shows a compositional bias: polar residues. Phosphoserine; by PKC is present on serine 259. The segment covering glutamate 281–glycine 292 has biased composition (acidic residues). Glycyl lysine isopeptide (Lys-Gly) (interchain with G-Cter in SUMO2) cross-links involve residues lysine 318, lysine 452, lysine 480, lysine 483, and lysine 498. The 98-residue stretch at glycine 374 to valine 471 folds into the BEN domain.

In terms of assembly, homooligomer; mediated by the BTB domain. Interacts with HDAC3 and HDAC4. Interacts (via BTB domain) with CUL3, PSMD7 and RCOR1. As to expression, overexpressed in several types of carcinomas including ovarian serous carcinomas. Expression levels positively correlate with tumor recurrence in ovarian serous carcinomas, and intense immunoreactivity in primary ovarian tumors predicts early recurrence. Up-regulated in ovarian carcinomas after chemotherapy, suggesting a role in development of chemotherapy resistance in ovarian cancer.

The protein localises to the nucleus. It localises to the cytoplasm. Functions as a transcriptional repressor. Seems to function as a transcriptional corepressor in neuronal cells through recruitment of HDAC3 and HDAC4. Contributes to tumor progression, and tumor cell proliferation and survival. This may be mediated at least in part through repressing transcriptional activity of GADD45GIP1. Required for recruiting the proteasome from the nucleus to the cytoplasm and dendritic spines. This is Nucleus accumbens-associated protein 1 (NACC1) from Homo sapiens (Human).